We begin with the raw amino-acid sequence, 256 residues long: DNA repair protein RecO (256 aa).

The protein belongs to the RecO family.

In terms of biological role, involved in DNA repair and RecF pathway recombination. The protein is DNA repair protein RecO of Streptococcus pneumoniae (strain Hungary19A-6).